We begin with the raw amino-acid sequence, 92 residues long: MSRSLKKGPFVANHLLKKVQKLNDLDEKQVIKTWSRSSVIIPIMIGHTISIHNGKEHIPLYITDLMVGHKLGEFAPTRTFKGHIKKDKKSKR.

This sequence belongs to the universal ribosomal protein uS19 family.

The protein localises to the plastid. It localises to the chloroplast. In terms of biological role, protein S19 forms a complex with S13 that binds strongly to the 16S ribosomal RNA. This chain is Small ribosomal subunit protein uS19c, found in Tupiella akineta (Green alga).